A 178-amino-acid chain; its full sequence is ATP-dependent protease subunit HslV (178 aa).

Threonine 7 is a catalytic residue. 3 residues coordinate Na(+): glycine 162, cysteine 165, and threonine 168.

It belongs to the peptidase T1B family. HslV subfamily. A double ring-shaped homohexamer of HslV is capped on each side by a ring-shaped HslU homohexamer. The assembly of the HslU/HslV complex is dependent on binding of ATP.

The protein resides in the cytoplasm. The catalysed reaction is ATP-dependent cleavage of peptide bonds with broad specificity.. Allosterically activated by HslU binding. In terms of biological role, protease subunit of a proteasome-like degradation complex believed to be a general protein degrading machinery. This Burkholderia orbicola (strain AU 1054) protein is ATP-dependent protease subunit HslV.